The following is a 274-amino-acid chain: Urease accessory protein UreD (274 aa).

Belongs to the UreD family. As to quaternary structure, ureD, UreF and UreG form a complex that acts as a GTP-hydrolysis-dependent molecular chaperone, activating the urease apoprotein by helping to assemble the nickel containing metallocenter of UreC. The UreE protein probably delivers the nickel.

Its subcellular location is the cytoplasm. In terms of biological role, required for maturation of urease via the functional incorporation of the urease nickel metallocenter. In Thermosynechococcus vestitus (strain NIES-2133 / IAM M-273 / BP-1), this protein is Urease accessory protein UreD.